Reading from the N-terminus, the 457-residue chain is Protein translocase subunit SecY (457 aa).

Residues 1-20 (MGVIDVLAAVGERFPAVRKP) are Cytoplasmic-facing. A helical membrane pass occupies residues 21–47 (ERKPTLYRRLAWTGVILVLYFIMSNIP). Topologically, residues 48-59 (LYGIPPQNIGGQ) are extracellular. Residues 60–67 (VDLQRIIF) constitute an intramembrane region (helical). Residues 60–88 (VDLQRIIFASSAGTLMELGIGPIVTASLI) traverse the membrane as a discontinuously helical segment. An intramembrane segment occupies 68 to 79 (ASSAGTLMELGI). The segment at residues 80–88 (GPIVTASLI) is an intramembrane region (helical). At 89–109 (IQVLVGAKIIKLDLADPEGRR) the chain is on the cytoplasmic side. The chain crosses the membrane as a helical span at residues 110-134 (KFTSAQKVLALAFAALEAVAFTVGG). Topologically, residues 135-146 (RYWVGTAIEPGP) are extracellular. The helical transmembrane segment at 147-171 (LDYALVSLQLFLGALLVIYFDEVMQ) threads the bilayer. Residues 172-178 (KGWGIGS) lie on the Cytoplasmic side of the membrane. The chain crosses the membrane as a helical span at residues 179–197 (AISLFILAGVAQGVVWSIF). Over 198–229 (GTIPGVAQDYGLVPAIISNPDLTLLARPNGFP) the chain is Extracellular. Residues 230-251 (DLTGFFTTLAAIILLVYLQAMR) form a helical membrane-spanning segment. Topologically, residues 252 to 276 (VEIPITSERFKGIRSRVPLQFIYVT) are cytoplasmic. A helical transmembrane segment spans residues 277-298 (NIPILLVGILVSDLLLVQRLLA). The Extracellular segment spans residues 299-332 (DYLGVESRAYQIYSSIVYYLSPPRGVVQSIADPV). A helical transmembrane segment spans residues 333 to 352 (KTAVFIASWTVLSIVFGYMW). The Cytoplasmic segment spans residues 353-395 (VEIAGLNPREQAERLIKGGLAIPGMRSDPRVLERVLRRYIYPL). Residues 396–414 (TFLSSLIVAALVIVADIFG) form a helical membrane-spanning segment. The Extracellular portion of the chain corresponds to 415 to 417 (AYG). Residues 418–432 (TGTGLLLAVGIINQY) traverse the membrane as a helical segment. At 433–457 (YAMITRERALETYPLLRRILGEEVV) the chain is on the cytoplasmic side.

It belongs to the SecY/SEC61-alpha family. As to quaternary structure, component of the Sec protein translocase complex. Heterotrimer consisting of alpha (SecY), beta (SecG) and gamma (SecE) subunits. The heterotrimers can form oligomers, although 1 heterotrimer is thought to be able to translocate proteins. Interacts with the ribosome. May interact with SecDF, and other proteins may be involved.

Its subcellular location is the cell membrane. The central subunit of the protein translocation channel SecYEG. Consists of two halves formed by TMs 1-5 and 6-10. These two domains form a lateral gate at the front which open onto the bilayer between TMs 2 and 7, and are clamped together by SecE at the back. The channel is closed by both a pore ring composed of hydrophobic SecY resides and a short helix (helix 2A) on the extracellular side of the membrane which forms a plug. The plug probably moves laterally to allow the channel to open. The ring and the pore may move independently. In Aeropyrum pernix (strain ATCC 700893 / DSM 11879 / JCM 9820 / NBRC 100138 / K1), this protein is Protein translocase subunit SecY.